Reading from the N-terminus, the 185-residue chain is Peptide deformylase 2 (185 aa).

Positions 108 and 150 each coordinate Fe cation. The active site involves glutamate 151. Residue histidine 154 participates in Fe cation binding.

The protein belongs to the polypeptide deformylase family. Fe(2+) serves as cofactor.

The enzyme catalyses N-terminal N-formyl-L-methionyl-[peptide] + H2O = N-terminal L-methionyl-[peptide] + formate. In terms of biological role, removes the formyl group from the N-terminal Met of newly synthesized proteins. Requires at least a dipeptide for an efficient rate of reaction. N-terminal L-methionine is a prerequisite for activity but the enzyme has broad specificity at other positions. This Nitrosomonas europaea (strain ATCC 19718 / CIP 103999 / KCTC 2705 / NBRC 14298) protein is Peptide deformylase 2.